The following is a 354-amino-acid chain: 3'-5' exonuclease (354 aa).

The interval 1–120 (MEKYLIKMPI…PSPEKEKPEK (120 aa)) is disordered. Basic and acidic residues predominate over residues 36–50 (TKKDTPKELKDKENA). Basic residues predominate over residues 59-70 (TKGRPGRPAVKR). A compositionally biased stretch (basic and acidic residues) spans 71 to 91 (KNLDNPDAKAEKKATEEENPP). Ser104, Ser110, and Ser112 each carry phosphoserine. The 3'-5' exonuclease domain maps to 146 to 314 (VLQWVEKQKD…GQVIYRELER (169 aa)). Mg(2+)-binding residues include Asp163, Glu165, and Asp301.

The protein belongs to the WRNexo family.

It is found in the nucleus. Functionally, has exonuclease activity on both single-stranded and duplex templates bearing overhangs, but not blunt ended duplex DNA, and cleaves in a 3'-5' direction. Essential for the formation of DNA replication focal centers. Has an important role in maintaining genome stability. This is 3'-5' exonuclease from Drosophila yakuba (Fruit fly).